We begin with the raw amino-acid sequence, 245 residues long: Small ribosomal subunit protein uS2 (245 aa).

It belongs to the universal ribosomal protein uS2 family.

The polypeptide is Small ribosomal subunit protein uS2 (Pseudomonas putida (strain GB-1)).